Reading from the N-terminus, the 375-residue chain is UPF0612 protein C569.003 (375 aa).

The protein belongs to the UPF0612 family.

The protein resides in the cytoplasm. This chain is UPF0612 protein C569.003, found in Schizosaccharomyces pombe (strain 972 / ATCC 24843) (Fission yeast).